A 431-amino-acid chain; its full sequence is MFFGGKGSLTYTLVIICFLTLRLAASQNCLNKSLEDVVIDIQSSLSKGIRGNEPIYTSTQEDCINSCCSTKIISGDKACNFMIFDTRKIARRPNCYLFFCPNEEACPLKPAKGLRSYRIIRDFPSLTRNLPSQELPQEDSLLPGQFSQAVTPLARHHIVYSKPTDISWRETLPQKFGSSDHLEKLFNMDKASAQLLVYKEKGHSQSSQISSDQEIAHLLPENVSVFPATVAVASPHTTSATPKPAIRLPTNASVTPSGTSQPQLATTSPPVTTVTSQPPTTLISTGFTRAVATLQAMATTAVLTTTFQAPTDLKGSLETIPFTEISNLTLNTGNVYNPTALSMSNVKSSATNKTASWEGREASPGRSSQGNVPENQYGLPFEKWLLIGSLLFGVLFLVIGLVLLGRILSESLRRKRYSRLDYLINGIYVDI.

A signal peptide spans 1 to 26; that stretch reads MFFGGKGSLTYTLVIICFLTLRLAAS. Over 27–385 the chain is Extracellular; that stretch reads QNCLNKSLED…QYGLPFEKWL (359 aa). Asparagine 31 is a glycosylation site (N-linked (GlcNAc...) asparagine). Residues 33-117 form the MANSC domain; the sequence is SLEDVVIDIQ…LKPAKGLRSY (85 aa). N-linked (GlcNAc...) asparagine glycans are attached at residues asparagine 222 and asparagine 251. A disordered region spans residues 236–279; that stretch reads HTTSATPKPAIRLPTNASVTPSGTSQPQLATTSPPVTTVTSQPP. Residues 250–265 are compositionally biased toward polar residues; that stretch reads TNASVTPSGTSQPQLA. A compositionally biased stretch (low complexity) spans 266 to 279; it reads TTSPPVTTVTSQPP. 2 N-linked (GlcNAc...) asparagine glycosylation sites follow: asparagine 327 and asparagine 352. The interval 352–372 is disordered; sequence NKTASWEGREASPGRSSQGNV. Residues 386–408 traverse the membrane as a helical segment; it reads LIGSLLFGVLFLVIGLVLLGRIL. At 409–431 the chain is on the cytoplasmic side; it reads SESLRRKRYSRLDYLINGIYVDI.

It is found in the membrane. This Macaca fascicularis (Crab-eating macaque) protein is MANSC domain-containing protein 1 (MANSC1).